A 61-amino-acid chain; its full sequence is Photosystem II reaction center protein K (61 aa).

A propeptide spanning residues 1–24 (MPNILSLTCICFNSVIYPTSFFFA) is cleaved from the precursor. The helical transmembrane segment at 32–52 (IFNPIVDFMPVIPLFFFLLAF) threads the bilayer.

The protein belongs to the PsbK family. As to quaternary structure, PSII is composed of 1 copy each of membrane proteins PsbA, PsbB, PsbC, PsbD, PsbE, PsbF, PsbH, PsbI, PsbJ, PsbK, PsbL, PsbM, PsbT, PsbX, PsbY, PsbZ, Psb30/Ycf12, at least 3 peripheral proteins of the oxygen-evolving complex and a large number of cofactors. It forms dimeric complexes.

It localises to the plastid. The protein localises to the chloroplast thylakoid membrane. One of the components of the core complex of photosystem II (PSII). PSII is a light-driven water:plastoquinone oxidoreductase that uses light energy to abstract electrons from H(2)O, generating O(2) and a proton gradient subsequently used for ATP formation. It consists of a core antenna complex that captures photons, and an electron transfer chain that converts photonic excitation into a charge separation. The sequence is that of Photosystem II reaction center protein K from Triticum aestivum (Wheat).